Consider the following 249-residue polypeptide: Hydroxyacylglutathione hydrolase (249 aa).

The Zn(2+) site is built by H53, H55, D57, H58, H110, D127, and H165.

It belongs to the metallo-beta-lactamase superfamily. Glyoxalase II family. Monomer. Zn(2+) is required as a cofactor.

The enzyme catalyses an S-(2-hydroxyacyl)glutathione + H2O = a 2-hydroxy carboxylate + glutathione + H(+). The protein operates within secondary metabolite metabolism; methylglyoxal degradation; (R)-lactate from methylglyoxal: step 2/2. Thiolesterase that catalyzes the hydrolysis of S-D-lactoyl-glutathione to form glutathione and D-lactic acid. This chain is Hydroxyacylglutathione hydrolase, found in Buchnera aphidicola subsp. Baizongia pistaciae (strain Bp).